The following is a 358-amino-acid chain: UDP-N-acetylglucosamine--N-acetylmuramyl-(pentapeptide) pyrophosphoryl-undecaprenol N-acetylglucosamine transferase (358 aa).

Residues 11 to 13, Asn-120, Arg-161, Ser-188, and Gln-282 contribute to the UDP-N-acetyl-alpha-D-glucosamine site; that span reads TGG.

Belongs to the glycosyltransferase 28 family. MurG subfamily.

Its subcellular location is the cell inner membrane. It carries out the reaction di-trans,octa-cis-undecaprenyl diphospho-N-acetyl-alpha-D-muramoyl-L-alanyl-D-glutamyl-meso-2,6-diaminopimeloyl-D-alanyl-D-alanine + UDP-N-acetyl-alpha-D-glucosamine = di-trans,octa-cis-undecaprenyl diphospho-[N-acetyl-alpha-D-glucosaminyl-(1-&gt;4)]-N-acetyl-alpha-D-muramoyl-L-alanyl-D-glutamyl-meso-2,6-diaminopimeloyl-D-alanyl-D-alanine + UDP + H(+). It participates in cell wall biogenesis; peptidoglycan biosynthesis. Functionally, cell wall formation. Catalyzes the transfer of a GlcNAc subunit on undecaprenyl-pyrophosphoryl-MurNAc-pentapeptide (lipid intermediate I) to form undecaprenyl-pyrophosphoryl-MurNAc-(pentapeptide)GlcNAc (lipid intermediate II). The chain is UDP-N-acetylglucosamine--N-acetylmuramyl-(pentapeptide) pyrophosphoryl-undecaprenol N-acetylglucosamine transferase from Synechococcus sp. (strain WH7803).